The sequence spans 307 residues: Thioredoxin reductase (307 aa).

34-41 (ESKAHGGQ) contributes to the FAD binding site. A disulfide bond links Cys134 and Cys137. 275 to 284 (DVRAKSFRQV) contributes to the FAD binding site.

It belongs to the class-II pyridine nucleotide-disulfide oxidoreductase family. As to quaternary structure, homodimer. It depends on FAD as a cofactor.

It localises to the cytoplasm. It carries out the reaction [thioredoxin]-dithiol + NADP(+) = [thioredoxin]-disulfide + NADPH + H(+). In Treponema pallidum (strain Nichols), this protein is Thioredoxin reductase (trxB).